A 188-amino-acid polypeptide reads, in one-letter code: Ribosome maturation factor RimM (188 aa).

In terms of domain architecture, PRC barrel spans 98–174 (EGTFYYHDLR…HLTADAPAGL (77 aa)). Residues 169-188 (DAPAGLIGPEPGEEDGAAES) form a disordered region. Positions 179 to 188 (PGEEDGAAES) are enriched in acidic residues.

This sequence belongs to the RimM family. As to quaternary structure, binds ribosomal protein uS19.

It localises to the cytoplasm. In terms of biological role, an accessory protein needed during the final step in the assembly of 30S ribosomal subunit, possibly for assembly of the head region. Essential for efficient processing of 16S rRNA. May be needed both before and after RbfA during the maturation of 16S rRNA. It has affinity for free ribosomal 30S subunits but not for 70S ribosomes. The chain is Ribosome maturation factor RimM from Deinococcus radiodurans (strain ATCC 13939 / DSM 20539 / JCM 16871 / CCUG 27074 / LMG 4051 / NBRC 15346 / NCIMB 9279 / VKM B-1422 / R1).